We begin with the raw amino-acid sequence, 601 residues long: Elongation factor 4 (601 aa).

The 183-residue stretch at 7-189 folds into the tr-type G domain; sequence DRIRNFSIIA…ALVTRLPAPK (183 aa). Residues 19-24 and 136-139 contribute to the GTP site; these read DHGKST and NKVD.

The protein belongs to the TRAFAC class translation factor GTPase superfamily. Classic translation factor GTPase family. LepA subfamily.

Its subcellular location is the cell inner membrane. The enzyme catalyses GTP + H2O = GDP + phosphate + H(+). Functionally, required for accurate and efficient protein synthesis under certain stress conditions. May act as a fidelity factor of the translation reaction, by catalyzing a one-codon backward translocation of tRNAs on improperly translocated ribosomes. Back-translocation proceeds from a post-translocation (POST) complex to a pre-translocation (PRE) complex, thus giving elongation factor G a second chance to translocate the tRNAs correctly. Binds to ribosomes in a GTP-dependent manner. This chain is Elongation factor 4, found in Granulibacter bethesdensis (strain ATCC BAA-1260 / CGDNIH1).